A 293-amino-acid chain; its full sequence is MRGSIMILLDEDTRCLVQGITGKQGSFHTRQMLEYGTRIVAGVTPGKGGQEFLGVDVYNSVEEVTEEMDVNASIIFVPAPFAKDAAFESIKHLDLVVIITEHIPVHDSMQIMEYASRMGKTVIGPNTPGIITPGIGKLGIMPTHIFTEGTIGIVSRSGTLTYEFAAQLTEAGFGQSTCVGIGGDPVTGLGFVDVLERFEDDPGTDAVVLIGEIGGDAEERAASYIEQMSKPVFAFISGATAPPGKRMGHAGAIIEGGTGTASSKREALEAAGAVVVDRPSAIVDEIRAQLGVR.

Residues 21–24, Lys47, and 99–101 contribute to the CoA site; these read TGKQ and ITE. Tyr162 provides a ligand contact to substrate. The active-site Tele-phosphohistidine intermediate is the His249.

It belongs to the succinate/malate CoA ligase alpha subunit family. In terms of assembly, heterotetramer of two alpha and two beta subunits.

It carries out the reaction succinate + ATP + CoA = succinyl-CoA + ADP + phosphate. It catalyses the reaction GTP + succinate + CoA = succinyl-CoA + GDP + phosphate. It participates in carbohydrate metabolism; tricarboxylic acid cycle; succinate from succinyl-CoA (ligase route): step 1/1. Its function is as follows. Succinyl-CoA synthetase functions in the citric acid cycle (TCA), coupling the hydrolysis of succinyl-CoA to the synthesis of either ATP or GTP and thus represents the only step of substrate-level phosphorylation in the TCA. The alpha subunit of the enzyme binds the substrates coenzyme A and phosphate, while succinate binding and nucleotide specificity is provided by the beta subunit. The protein is Succinate--CoA ligase [ADP-forming] subunit alpha of Methanothermobacter thermautotrophicus (strain ATCC 29096 / DSM 1053 / JCM 10044 / NBRC 100330 / Delta H) (Methanobacterium thermoautotrophicum).